Reading from the N-terminus, the 453-residue chain is Ribosomal protein uS12 methylthiotransferase RimO (453 aa).

Positions 9–124 (PKVGFVSLGC…VMEAVHTHLP (116 aa)) constitute an MTTase N-terminal domain. Residues Cys-18, Cys-54, Cys-83, Cys-155, Cys-159, and Cys-162 each coordinate [4Fe-4S] cluster. The 242-residue stretch at 141–382 (LTPKHYAYLK…MEVAERVSAR (242 aa)) folds into the Radical SAM core domain. A TRAM domain is found at 385-453 (QRKVGKSLRV…ADGHDLWGEV (69 aa)).

It belongs to the methylthiotransferase family. RimO subfamily. Requires [4Fe-4S] cluster as cofactor.

The protein resides in the cytoplasm. The enzyme catalyses L-aspartate(89)-[ribosomal protein uS12]-hydrogen + (sulfur carrier)-SH + AH2 + 2 S-adenosyl-L-methionine = 3-methylsulfanyl-L-aspartate(89)-[ribosomal protein uS12]-hydrogen + (sulfur carrier)-H + 5'-deoxyadenosine + L-methionine + A + S-adenosyl-L-homocysteine + 2 H(+). Functionally, catalyzes the methylthiolation of an aspartic acid residue of ribosomal protein uS12. This chain is Ribosomal protein uS12 methylthiotransferase RimO, found in Ralstonia pickettii (strain 12J).